A 236-amino-acid polypeptide reads, in one-letter code: 2,3,4,5-tetrahydropyridine-2,6-dicarboxylate N-acetyltransferase (236 aa).

It belongs to the transferase hexapeptide repeat family. DapH subfamily.

The enzyme catalyses (S)-2,3,4,5-tetrahydrodipicolinate + acetyl-CoA + H2O = L-2-acetamido-6-oxoheptanedioate + CoA. The protein operates within amino-acid biosynthesis; L-lysine biosynthesis via DAP pathway; LL-2,6-diaminopimelate from (S)-tetrahydrodipicolinate (acetylase route): step 1/3. Functionally, catalyzes the transfer of an acetyl group from acetyl-CoA to tetrahydrodipicolinate. This Listeria innocua serovar 6a (strain ATCC BAA-680 / CLIP 11262) protein is 2,3,4,5-tetrahydropyridine-2,6-dicarboxylate N-acetyltransferase.